The following is a 196-amino-acid chain: MAGEGKPLPIEFYQRPSVELAPLLLGCLLVKETDEGTASGFIVETEAYMGAEDRAAHSFGNRRTKRTEIMFHEAGRIYTYVMHTHTLMNVVAADIGIPQAVLIRAAEPHEGQFLMESRRPGRHPREWTNGPGKLTKAMGISMNDYGGMITEPPLYITEGFTPEHISTGPRIGIDNSGEARDYPWRYWVTGNRYVSR.

This sequence belongs to the DNA glycosylase MPG family.

The chain is Putative 3-methyladenine DNA glycosylase from Bacillus velezensis (strain DSM 23117 / BGSC 10A6 / LMG 26770 / FZB42) (Bacillus amyloliquefaciens subsp. plantarum).